A 285-amino-acid polypeptide reads, in one-letter code: Eukaryotic translation initiation factor 2 subunit beta (285 aa).

Positions Asp30–Thr69 are disordered. Ser40 carries the phosphoserine modification. Thr69 carries the post-translational modification Phosphothreonine. Phosphoserine occurs at positions 80, 92, and 112. Phosphothreonine is present on Thr116. A Phosphoserine modification is found at Ser118. The C4-type zinc-finger motif lies at Cys236–Cys262.

It belongs to the eIF-2-beta/eIF-5 family. Eukaryotic translation initiation factor 2 eIF2 is a heterotrimeric complex composed of an alpha, a beta and a gamma subunit. The factors eIF-1, eIF-2, eIF-3, TIF5/eIF-5 and methionyl-tRNAi form a multifactor complex (MFC) that may bind to the 40S ribosome. Interacts with GCD6. Interacts with GCD1. Interacts with TIF5/eIF-5. Interacts with CDC123.

The protein localises to the cytoplasm. It is found in the cytosol. Component of the eIF2 complex that functions in the early steps of protein synthesis by forming a ternary complex with GTP and initiator tRNA. This complex binds to a 40S ribosomal subunit, followed by mRNA binding to form a 43S pre-initiation complex (43S PIC). Junction of the 60S ribosomal subunit to form the 80S initiation complex is preceded by hydrolysis of the GTP bound to eIF2 and release of an eIF2-GDP binary complex. In order for eIF2 to recycle and catalyze another round of initiation, the GDP bound to eIF2 must exchange with GTP by way of a reaction catalyzed by eIF2B. The protein is Eukaryotic translation initiation factor 2 subunit beta (SUI3) of Saccharomyces cerevisiae (strain ATCC 204508 / S288c) (Baker's yeast).